The primary structure comprises 148 residues: Putative cyclin-dependent kinase inhibitor SPL2 (148 aa).

Ser59 and Ser86 each carry phosphoserine.

It localises to the cytoplasmic granule. The protein resides in the cytoplasm. Its function is as follows. Putative cyclin-dependent kinase (CDK) inhibitor necessary and sufficient for PHO pathway-dependent down-regulation of low-affinity phosphate transport. This Saccharomyces cerevisiae (strain YJM789) (Baker's yeast) protein is Putative cyclin-dependent kinase inhibitor SPL2 (SPL2).